The primary structure comprises 233 residues: Hydroxyacylglutathione hydrolase (233 aa).

Positions 52, 54, 56, 57, 108, 125, and 163 each coordinate Zn(2+).

This sequence belongs to the metallo-beta-lactamase superfamily. Glyoxalase II family. As to quaternary structure, monomer. Zn(2+) serves as cofactor.

The catalysed reaction is an S-(2-hydroxyacyl)glutathione + H2O = a 2-hydroxy carboxylate + glutathione + H(+). Its pathway is secondary metabolite metabolism; methylglyoxal degradation; (R)-lactate from methylglyoxal: step 2/2. In terms of biological role, thiolesterase that catalyzes the hydrolysis of S-D-lactoyl-glutathione to form glutathione and D-lactic acid. In Actinobacillus succinogenes (strain ATCC 55618 / DSM 22257 / CCUG 43843 / 130Z), this protein is Hydroxyacylglutathione hydrolase.